Consider the following 82-residue polypeptide: DNA-directed RNA polymerase subunit omega (82 aa).

Belongs to the RNA polymerase subunit omega family. As to quaternary structure, the RNAP catalytic core consists of 2 alpha, 1 beta, 1 beta' and 1 omega subunit. When a sigma factor is associated with the core the holoenzyme is formed, which can initiate transcription.

It catalyses the reaction RNA(n) + a ribonucleoside 5'-triphosphate = RNA(n+1) + diphosphate. In terms of biological role, promotes RNA polymerase assembly. Latches the N- and C-terminal regions of the beta' subunit thereby facilitating its interaction with the beta and alpha subunits. The sequence is that of DNA-directed RNA polymerase subunit omega from Lachnoclostridium phytofermentans (strain ATCC 700394 / DSM 18823 / ISDg) (Clostridium phytofermentans).